The chain runs to 723 residues: Aminodeoxychorismate synthase (723 aa).

The 194-residue stretch at 2–195 folds into the Glutamine amidotransferase type-1 domain; the sequence is RTLLVDNYDS…RDLTERHGRT (194 aa). Residue Cys-82 is the Nucleophile of the active site. The disordered stretch occupies residues 96–117; the sequence is VGRAPEPRHGRTSAVRHDGTGL. Over residues 98 to 114 the composition is skewed to basic and acidic residues; that stretch reads RAPEPRHGRTSAVRHDG. Active-site residues include His-169 and Glu-171. 2 disordered regions span residues 192–219 and 693–723; these read HGRTRHGGRAGHGTLPPPAPARETKATT and FPGRERPGKDLDGEPDDGTDAGAPKDLVLPG. The interval 255 to 723 is PABB component; the sequence is LDSSRPGGEL…GAPKDLVLPG (469 aa). Residues 695 to 704 are compositionally biased toward basic and acidic residues; sequence GRERPGKDLD.

This sequence in the C-terminal section; belongs to the anthranilate synthase component I family.

The enzyme catalyses chorismate + L-glutamine = 4-amino-4-deoxychorismate + L-glutamate. It functions in the pathway antibiotic biosynthesis; candicidin biosynthesis. Functionally, involved in candicidin biosynthesis. Catalyzes the biosynthesis of 4-amino-4-deoxychorismate (ADC) from chorismate and glutamine. This chain is Aminodeoxychorismate synthase, found in Streptomyces griseus.